Here is a 429-residue protein sequence, read N- to C-terminus: Phosphoribosylamine--glycine ligase (429 aa).

Residues 109-316 (KDFLARHQIP…LVELCLAAID (208 aa)) form the ATP-grasp domain. Residue 135-196 (VREQGAPIVV…EEFLDGEEAS (62 aa)) participates in ATP binding. The tract at residues 212-234 (SQDHKRVGDKDTGPNTGGMGAYS) is disordered. Residues 213–223 (QDHKRVGDKDT) show a composition bias toward basic and acidic residues. Residues Glu-286 and Asn-288 each coordinate Mg(2+).

Belongs to the GARS family. It depends on Mg(2+) as a cofactor. Mn(2+) serves as cofactor.

The catalysed reaction is 5-phospho-beta-D-ribosylamine + glycine + ATP = N(1)-(5-phospho-beta-D-ribosyl)glycinamide + ADP + phosphate + H(+). It participates in purine metabolism; IMP biosynthesis via de novo pathway; N(1)-(5-phospho-D-ribosyl)glycinamide from 5-phospho-alpha-D-ribose 1-diphosphate: step 2/2. This chain is Phosphoribosylamine--glycine ligase, found in Vibrio vulnificus (strain YJ016).